A 221-amino-acid polypeptide reads, in one-letter code: Tetraspanin-2 (221 aa).

At 1-13 the chain is on the cytoplasmic side; that stretch reads MGRFRGGLRCIKY. A helical membrane pass occupies residues 14–34; that stretch reads LLLGFNLLFWLAGSAVIAFGL. The Extracellular segment spans residues 35 to 54; the sequence is WFRFGGTIKDLSSEEKSPEY. Residues 55–75 form a helical membrane-spanning segment; the sequence is FYVGLYVLVGAGALMMAVGFF. The Cytoplasmic portion of the chain corresponds to 76-90; it reads GCCGAMRESQCVLGS. The helical transmembrane segment at 91–111 threads the bilayer; that stretch reads FFTCLLVIFAAEVTTGVFAFI. Residues 112 to 188 lie on the Extracellular side of the membrane; sequence GKDVAIRHVQ…ETIISVKLQL (77 aa). N-linked (GlcNAc...) asparagine glycosylation occurs at Asn139. A helical membrane pass occupies residues 189–209; it reads IGIVGIGIAGLTIFGMIFSMV. Over 210–221 the chain is Cytoplasmic; the sequence is LCCAIRNSRDVI.

It belongs to the tetraspanin (TM4SF) family. In terms of tissue distribution, expression is restricted to the nervous system.

The protein localises to the membrane. Its function is as follows. May play a role in signalling in oligodendrocytes in the early stages of their terminal differentiation into myelin-forming glia and may also function in stabilizing the mature sheath. The sequence is that of Tetraspanin-2 (Tspan2) from Rattus norvegicus (Rat).